Here is a 512-residue protein sequence, read N- to C-terminus: MIKDMIDSIEQFAQTQADFPVYDCLGERRTYGQLKRDSDSIAAFIDSLALLAKSPVLVFGAQTYDMLATFVALTKSGHAYIPVDVHSAPERILAIIEIAKPSLIIAIEEFPLTIEGISLVSLSEIESAKLAEMPYERTHSVKGDDNYYIIFTSGTTGQPKGVQISHDNLLSFTNWMIEDAAFDVPKQPQMLAQPPYSFDLSVMYWAPTLALGGTLFALPKELVADFKQLFTTIAQLPVGIWTSTPSFADMAMLSDDFCQARMPALTHFYFDGEELTVSTARKLFERFPSAKIINAYGPTEATVALSAIEITREMVDNYTRLPIGYPKPDSPTYIIDEDGKELASGEQGEIIVTGPAVSKGYLNNPEKTAEAFFTFKGQPAYHTGDIGSLTEDNILLYGGRLDFQIKYAGYRIELEDVSQQLNQSPMVASAVAVPRYNKEHKVQNLLAYIVVKDGVKERFDRELELTKAIKASVKDHMMSYMMPSKFLYRDSLPLTPNGKIDIKTLINEVNNR.

ATP is bound at residue 152 to 153; it reads TS. Aspartate 199 serves as a coordination point for D-alanine. 294–299 provides a ligand contact to ATP; it reads NAYGPT. A D-alanine-binding site is contributed by valine 303. ATP is bound by residues aspartate 385, 397-400, and lysine 499; that span reads YGGR. Lysine 499 is a binding site for D-alanine.

It belongs to the ATP-dependent AMP-binding enzyme family. DltA subfamily.

Its subcellular location is the cytoplasm. The enzyme catalyses holo-[D-alanyl-carrier protein] + D-alanine + ATP = D-alanyl-[D-alanyl-carrier protein] + AMP + diphosphate. It participates in cell wall biogenesis; lipoteichoic acid biosynthesis. Its function is as follows. Catalyzes the first step in the D-alanylation of lipoteichoic acid (LTA), the activation of D-alanine and its transfer onto the D-alanyl carrier protein (Dcp) DltC. In an ATP-dependent two-step reaction, forms a high energy D-alanyl-AMP intermediate, followed by transfer of the D-alanyl residue as a thiol ester to the phosphopantheinyl prosthetic group of the Dcp. D-alanylation of LTA plays an important role in modulating the properties of the cell wall in Gram-positive bacteria, influencing the net charge of the cell wall. The chain is D-alanine--D-alanyl carrier protein ligase from Streptococcus pyogenes serotype M4 (strain MGAS10750).